The following is a 308-amino-acid chain: Aspartate carbamoyltransferase catalytic subunit (308 aa).

Arginine 55 and threonine 56 together coordinate carbamoyl phosphate. Lysine 84 provides a ligand contact to L-aspartate. Positions 105, 133, and 136 each coordinate carbamoyl phosphate. Residues arginine 167 and arginine 228 each contribute to the L-aspartate site. Carbamoyl phosphate-binding residues include leucine 267 and proline 268.

This sequence belongs to the aspartate/ornithine carbamoyltransferase superfamily. ATCase family. As to quaternary structure, heterooligomer of catalytic and regulatory chains.

The catalysed reaction is carbamoyl phosphate + L-aspartate = N-carbamoyl-L-aspartate + phosphate + H(+). It participates in pyrimidine metabolism; UMP biosynthesis via de novo pathway; (S)-dihydroorotate from bicarbonate: step 2/3. Catalyzes the condensation of carbamoyl phosphate and aspartate to form carbamoyl aspartate and inorganic phosphate, the committed step in the de novo pyrimidine nucleotide biosynthesis pathway. The chain is Aspartate carbamoyltransferase catalytic subunit from Methanocella arvoryzae (strain DSM 22066 / NBRC 105507 / MRE50).